The chain runs to 67 residues: Brevinin-1CDYa (67 aa).

A signal peptide spans 1–22; sequence MFTLKKSLLLIFFLGTINLSLC. The propeptide occupies 23-45; it reads EEERNADEEERRDDLEERDVEVE. Cys-61 and Cys-67 are disulfide-bonded.

It belongs to the frog skin active peptide (FSAP) family. Brevinin subfamily. In terms of tissue distribution, expressed by the skin glands.

It localises to the secreted. Its function is as follows. Antimicrobial peptide. Has low activity against the Gram-positive bacterium S.aureus (MIC=12.5 uM) and the Gram-negative bacterium E.coli (MIC=25 uM). Has weak hemolytic activity against human erythrocytes. In Rana dybowskii (Dybovsky's frog), this protein is Brevinin-1CDYa.